The primary structure comprises 187 residues: UPF0301 protein Sbal195_3177 (187 aa).

It belongs to the UPF0301 (AlgH) family.

The protein is UPF0301 protein Sbal195_3177 of Shewanella baltica (strain OS195).